We begin with the raw amino-acid sequence, 240 residues long: MSHSISPIGHVRSCFKEKFAIPRQPQLAPAATGVLELLPPFDTGDAVEGLEQVSHVWLIFLFHQALEDKPRLKVRPPRLGGNQSMGVFATRATHRPNGLGQSVVKLEKVEPGRLWLSGIDLLDGTPVIDIKPYVPYADIVPDAHNAIADAPPSSIAVHWSDEALRQAHEHGLRLCQPVRELVGNASPRTRARPTRSRRPSAAMACACGTSTCTGTTPPMARSACWTCNAPPTETSLSPQD.

A TsaA-like domain is found at isoleucine 5 to aspartate 142. S-adenosyl-L-methionine-binding positions include proline 22 to glutamine 24, histidine 63 to glutamine 64, arginine 91, and leucine 122 to threonine 125.

The protein belongs to the tRNA methyltransferase O family.

In Pseudomonas aeruginosa, this protein is Putative S-adenosylmethionine-dependent methyltransferase RcsF (rcsF).